The chain runs to 401 residues: 4-hydroxy-3-methylbut-2-en-1-yl diphosphate synthase (ferredoxin) (401 aa).

Positions 306, 309, 340, and 347 each coordinate [4Fe-4S] cluster.

The protein belongs to the IspG family. [4Fe-4S] cluster is required as a cofactor.

It carries out the reaction (2E)-4-hydroxy-3-methylbut-2-enyl diphosphate + 2 oxidized [2Fe-2S]-[ferredoxin] + H2O = 2-C-methyl-D-erythritol 2,4-cyclic diphosphate + 2 reduced [2Fe-2S]-[ferredoxin] + H(+). The protein operates within isoprenoid biosynthesis; isopentenyl diphosphate biosynthesis via DXP pathway; isopentenyl diphosphate from 1-deoxy-D-xylulose 5-phosphate: step 5/6. Its function is as follows. Converts 2C-methyl-D-erythritol 2,4-cyclodiphosphate (ME-2,4cPP) into 1-hydroxy-2-methyl-2-(E)-butenyl 4-diphosphate. The chain is 4-hydroxy-3-methylbut-2-en-1-yl diphosphate synthase (ferredoxin) from Synechococcus sp. (strain CC9902).